The following is a 301-amino-acid chain: Phosphatidylglycerol--prolipoprotein diacylglyceryl transferase (301 aa).

The next 7 helical transmembrane spans lie at Leu-17–Gly-37, Met-59–Tyr-79, Gly-97–Trp-117, Phe-129–Gly-149, Pro-203–Phe-223, Val-230–Phe-250, and Phe-257–Ile-277. Residue Arg-142 participates in a 1,2-diacyl-sn-glycero-3-phospho-(1'-sn-glycerol) binding.

The protein belongs to the Lgt family.

It localises to the cell inner membrane. The catalysed reaction is L-cysteinyl-[prolipoprotein] + a 1,2-diacyl-sn-glycero-3-phospho-(1'-sn-glycerol) = an S-1,2-diacyl-sn-glyceryl-L-cysteinyl-[prolipoprotein] + sn-glycerol 1-phosphate + H(+). It functions in the pathway protein modification; lipoprotein biosynthesis (diacylglyceryl transfer). Catalyzes the transfer of the diacylglyceryl group from phosphatidylglycerol to the sulfhydryl group of the N-terminal cysteine of a prolipoprotein, the first step in the formation of mature lipoproteins. This Paraburkholderia phymatum (strain DSM 17167 / CIP 108236 / LMG 21445 / STM815) (Burkholderia phymatum) protein is Phosphatidylglycerol--prolipoprotein diacylglyceryl transferase.